We begin with the raw amino-acid sequence, 148 residues long: Putative ankyrin repeat protein RF_1158 (148 aa).

One copy of the ANK repeat lies at 82 to 115 (RPTTALGIAIAQGNSEEVIKYLLANGADPKLAFD).

In Rickettsia felis (strain ATCC VR-1525 / URRWXCal2) (Rickettsia azadi), this protein is Putative ankyrin repeat protein RF_1158.